Consider the following 514-residue polypeptide: ATP synthase subunit alpha (514 aa).

Residue 170 to 177 coordinates ATP; the sequence is GDRQIGKT.

This sequence belongs to the ATPase alpha/beta chains family. In terms of assembly, F-type ATPases have 2 components, CF(1) - the catalytic core - and CF(0) - the membrane proton channel. CF(1) has five subunits: alpha(3), beta(3), gamma(1), delta(1), epsilon(1). CF(0) has three main subunits: a(1), b(2) and c(9-12). The alpha and beta chains form an alternating ring which encloses part of the gamma chain. CF(1) is attached to CF(0) by a central stalk formed by the gamma and epsilon chains, while a peripheral stalk is formed by the delta and b chains.

The protein resides in the cell inner membrane. It catalyses the reaction ATP + H2O + 4 H(+)(in) = ADP + phosphate + 5 H(+)(out). Its function is as follows. Produces ATP from ADP in the presence of a proton gradient across the membrane. The alpha chain is a regulatory subunit. This chain is ATP synthase subunit alpha, found in Pseudomonas savastanoi pv. phaseolicola (strain 1448A / Race 6) (Pseudomonas syringae pv. phaseolicola (strain 1448A / Race 6)).